The following is a 553-amino-acid chain: MAFPELLDRVGGRGRFQLLQAVALVTPILWVTTQNMLENFSAAVPHHRCWVPLLDNSTSQASIPGDFGRDVLLAVSIPPGPDQRPHQCLRFRQPQWQLIESNTTATNWSDADTEPCEDGWVYDHSTFRSTIVTTWDLVCDSQALRPMAQSIFLAGILVGAAVCGHASDRFGRRRVLTWSYLLVSVSGTIAALMPTFPLYCLFRFLVASAVAGVMMNTASLLMEWTSAQAGPLMMTLNALGFSFGQVLTGSVAYGVRSWRMLQLAVSAPFFLFFVYSWWLPESARWLITVGRLDQSLRELQRVAAVNRRKAEADTLTVEVLRSAMQEEPNGNQAGARLGTLLHTPGLRLRTFISMLCWFAFGFTFYGLALDLQALGSNIFLLQALIGIVDLPVKMGSLLLLSRLGRRLCQASSLVLPGLCILANILVPREMGILRSSLAVLGLGSLGAAFTCVTIFSSELFPTVIRMTAVGLGQVAARGGAMLGPLVRLLGVYGSWLPLLVYGVVPVLSGLAALLLPETKNLPLPDTIQDIQKQSVKKVTHDIAGGSVLKSARL.

Residues Phe16–Met36 traverse the membrane as a helical segment. N-linked (GlcNAc...) asparagine glycans are attached at residues Asn56, Asn102, and Asn107. 11 consecutive transmembrane segments (helical) span residues Pro146–Ala166, Leu182–Phe202, Phe204–Trp224, Leu232–Ala252, Met260–Pro280, Phe351–Leu371, Ile378–Leu398, Leu407–Pro427, Ser435–Phe455, Met466–Val486, and Trp495–Leu515. Ser534 bears the Phosphoserine mark.

Belongs to the major facilitator (TC 2.A.1) superfamily. Organic cation transporter (TC 2.A.1.19) family. Interacts with PDZK1. In terms of processing, N-glycosylated. As to expression, expressed in the proximal tubular epithelial cells in kidney.

It localises to the apical cell membrane. The catalysed reaction is urate(out) + (S)-lactate(in) = urate(in) + (S)-lactate(out). The enzyme catalyses nicotinate(in) + urate(out) = nicotinate(out) + urate(in). It carries out the reaction urate(out) + n chloride(in) = urate(in) + n chloride(out). It catalyses the reaction orotate(out) + nicotinate(in) = orotate(in) + nicotinate(out). Electroneutral antiporter that translocates urate across the apical membrane of proximal tubular cells in exchange for monovalent organic or inorganic anions. Involved in renal reabsorption of urate and helps maintaining blood levels of uric acid. Mediates urate uptake by an exchange with organic anions such as (S)-lactate and nicotinate, and inorganic anion Cl(-). Other inorganic anions such as Br(-), I(-) and NO3(-) may also act as counteranions that exchange for urate. Also mediates orotate tubular uptake coupled with nicotinate efflux and to a lesser extent with lactate efflux, therefore displaying a potential role in orotate renal reabsorption. Orotate transport is Cl(-)-dependent. This Rattus norvegicus (Rat) protein is Solute carrier family 22 member 12 (Slc22a12).